A 371-amino-acid chain; its full sequence is Alanine racemase (371 aa).

The Proton acceptor; specific for D-alanine role is filled by Lys39. N6-(pyridoxal phosphate)lysine is present on Lys39. Arg137 serves as a coordination point for substrate. The active-site Proton acceptor; specific for L-alanine is Tyr266. Substrate is bound at residue Met314.

The protein belongs to the alanine racemase family. Requires pyridoxal 5'-phosphate as cofactor.

The enzyme catalyses L-alanine = D-alanine. It functions in the pathway amino-acid biosynthesis; D-alanine biosynthesis; D-alanine from L-alanine: step 1/1. Its function is as follows. Catalyzes the interconversion of L-alanine and D-alanine. May also act on other amino acids. The sequence is that of Alanine racemase (alr) from Desulfovibrio desulfuricans (strain ATCC 27774 / DSM 6949 / MB).